Consider the following 250-residue polypeptide: PF03932 family protein CutC (250 aa).

It belongs to the CutC family.

Its subcellular location is the cytoplasm. In Proteus mirabilis (strain HI4320), this protein is PF03932 family protein CutC.